The following is a 255-amino-acid chain: AA9 family lytic polysaccharide monooxygenase D (255 aa).

The N-terminal stretch at 1–19 is a signal peptide; the sequence is MYRTLGSIALLAGGAAAHG. Cu(2+) contacts are provided by His18 and His92. Disulfide bonds link Cys65/Cys189 and Cys104/Cys111. Asn152 carries N-linked (GlcNAc...) asparagine glycosylation. O2 is bound by residues His178 and Gln184. Tyr186 contacts Cu(2+). Residue Asn220 is glycosylated (N-linked (GlcNAc...) asparagine).

The protein belongs to the polysaccharide monooxygenase AA9 family. It depends on Cu(2+) as a cofactor.

The protein resides in the secreted. It carries out the reaction [(1-&gt;4)-beta-D-glucosyl]n+m + reduced acceptor + O2 = 4-dehydro-beta-D-glucosyl-[(1-&gt;4)-beta-D-glucosyl]n-1 + [(1-&gt;4)-beta-D-glucosyl]m + acceptor + H2O.. Functionally, lytic polysaccharide monooxygenase (LPMO) that depolymerizes crystalline and amorphous polysaccharides via the oxidation of scissile alpha- or beta-(1-4)-glycosidic bonds, yielding specifically C1 oxidation product. Catalysis by LPMOs requires the reduction of the active-site copper from Cu(II) to Cu(I) by a reducing agent and H(2)O(2) or O(2) as a cosubstrate. Is active on regenerated amorphous cellulose (RAC) in the presence of ascorbic acid or 3-methylcatechol. Also acts on phosphoric acid swollen cellulose (PASC) as a substrate. The chain is AA9 family lytic polysaccharide monooxygenase D from Thermothelomyces thermophilus (strain ATCC 42464 / BCRC 31852 / DSM 1799) (Sporotrichum thermophile).